A 296-amino-acid polypeptide reads, in one-letter code: Acetylglutamate kinase (296 aa).

Residues 67–68, Arg-89, and Asn-194 each bind substrate; that span reads GG.

Belongs to the acetylglutamate kinase family. ArgB subfamily.

Its subcellular location is the cytoplasm. The catalysed reaction is N-acetyl-L-glutamate + ATP = N-acetyl-L-glutamyl 5-phosphate + ADP. It functions in the pathway amino-acid biosynthesis; L-arginine biosynthesis; N(2)-acetyl-L-ornithine from L-glutamate: step 2/4. Functionally, catalyzes the ATP-dependent phosphorylation of N-acetyl-L-glutamate. The chain is Acetylglutamate kinase from Brucella abortus (strain S19).